A 63-amino-acid chain; its full sequence is Large ribosomal subunit protein uL29 (63 aa).

Belongs to the universal ribosomal protein uL29 family.

The chain is Large ribosomal subunit protein uL29 from Pseudoalteromonas translucida (strain TAC 125).